The primary structure comprises 496 residues: Probable E3 ubiquitin-protein ligase ARI12 (496 aa).

The interval 110–319 (NEYFCGACGE…GDLHFCTFDA (210 aa)) is TRIAD supradomain. Zn(2+)-binding residues include Cys114, Cys117, Cys131, His133, Cys136, Cys139, Cys162, Cys172, Cys240, Cys243, His248, Cys253, Cys267, Cys270, Cys286, and Cys289. An RING-type 1 zinc finger spans residues 114 to 172 (CGACGESHPHKNLASVSCGHRICTRCWTSHINKIISEKPAAEWNLWLKCPVRVGLHASC). Residues 191 to 253 (FNYNQYLLRS…REDAHSPVDC (63 aa)) form an IBR-type zinc finger. The segment at 267 to 297 (CPKCKLRIPRNQDNSLKMKCLPCNYVFCWFC) adopts an RING-type 2; atypical zinc-finger fold.

Belongs to the RBR family. Ariadne subfamily. Requires Zn(2+) as cofactor. Preferentially expressed in roots.

It carries out the reaction [E2 ubiquitin-conjugating enzyme]-S-ubiquitinyl-L-cysteine + [acceptor protein]-L-lysine = [E2 ubiquitin-conjugating enzyme]-L-cysteine + [acceptor protein]-N(6)-ubiquitinyl-L-lysine.. It participates in protein modification; protein ubiquitination. Might act as an E3 ubiquitin-protein ligase, or as part of E3 complex, which accepts ubiquitin from specific E2 ubiquitin-conjugating enzymes and then transfers it to substrates. The polypeptide is Probable E3 ubiquitin-protein ligase ARI12 (ARI12) (Arabidopsis thaliana (Mouse-ear cress)).